Consider the following 114-residue polypeptide: Immunomodulatory protein FIP-Fve (114 aa).

Ser1 carries the N-acetylserine modification.

This sequence belongs to the fungal immunomodulatory protein (FIP) family. Homodimer.

In terms of biological role, lectin with specificity for complex cell-surface carbohydrates. Possesses immunomodulatory activity, stimulates lymphocyte mitogenesis, suppresses systemic anaphylaxis reactions and edema, enhances transcription of IL-2, IFN-gamma and TNF-alpha and hemagglutinates red blood cells. The sequence is that of Immunomodulatory protein FIP-Fve from Flammulina velutipes (Agaricus velutipes).